A 276-amino-acid polypeptide reads, in one-letter code: Transmembrane protein 45B (276 aa).

6 consecutive transmembrane segments (helical) span residues 7-27 (HALP…KYPL), 48-68 (IIEA…EQFV), 95-115 (LFFA…HVPL), 147-167 (IHSL…VEVV), 181-201 (LLLL…PPFG), and 213-233 (IMFV…ILAA). Phosphoserine is present on residues serine 271 and serine 273.

It belongs to the TMEM45 family.

It is found in the endosome membrane. The protein localises to the lysosome membrane. Its subcellular location is the golgi apparatus. It localises to the trans-Golgi network membrane. Its function is as follows. Plays a role in innate immunity. This is Transmembrane protein 45B (TMEM45B) from Bos taurus (Bovine).